A 275-amino-acid chain; its full sequence is Vitamin B12-binding protein (275 aa).

Positions 1 to 19 (MMNKICLYLPLFFSSLTMA) are cleaved as a signal peptide. Residues 25–272 (RVISLAPHAT…EVCEHFESVK (248 aa)) form the Fe/B12 periplasmic-binding domain. A disulfide bridge connects residues C185 and C265.

It belongs to the BtuF family. The complex is composed of two ATP-binding proteins (BtuD), two transmembrane proteins (BtuC) and a solute-binding protein (BtuF).

It is found in the periplasm. Functionally, part of the ABC transporter complex BtuCDF involved in vitamin B12 import. Binds vitamin B12 and delivers it to the periplasmic surface of BtuC. The polypeptide is Vitamin B12-binding protein (Vibrio parahaemolyticus serotype O3:K6 (strain RIMD 2210633)).